Reading from the N-terminus, the 1534-residue chain is DNA-directed RNA polymerase subunit beta'' (1534 aa).

The Zn(2+) site is built by Cys-220, Cys-296, Cys-303, and Cys-306. Composition is skewed to basic and acidic residues over residues 644–668 (RTQE…RTRE) and 678–688 (PENKYRTREGE). Disordered stretches follow at residues 644 to 698 (RTQE…EDEY) and 719 to 800 (YRTL…KKEG). Composition is skewed to acidic residues over residues 744 to 762 (GEYE…SSED) and 770 to 789 (TLEE…EYGS).

Belongs to the RNA polymerase beta' chain family. RpoC2 subfamily. In terms of assembly, in plastids the minimal PEP RNA polymerase catalytic core is composed of four subunits: alpha, beta, beta', and beta''. When a (nuclear-encoded) sigma factor is associated with the core the holoenzyme is formed, which can initiate transcription. Requires Zn(2+) as cofactor.

The protein localises to the plastid. The protein resides in the chloroplast. It carries out the reaction RNA(n) + a ribonucleoside 5'-triphosphate = RNA(n+1) + diphosphate. In terms of biological role, DNA-dependent RNA polymerase catalyzes the transcription of DNA into RNA using the four ribonucleoside triphosphates as substrates. This is DNA-directed RNA polymerase subunit beta'' from Saccharum officinarum (Sugarcane).